Reading from the N-terminus, the 98-residue chain is Protein translation factor SUI1 homolog (98 aa).

The protein belongs to the SUI1 family.

The sequence is that of Protein translation factor SUI1 homolog from Thermococcus kodakarensis (strain ATCC BAA-918 / JCM 12380 / KOD1) (Pyrococcus kodakaraensis (strain KOD1)).